The chain runs to 660 residues: Protein SCARECROW 2 (660 aa).

Disordered stretches follow at residues 1-33 (MGSSSLLLFPSSSSSATHSSYSPSSSSHAITSL) and 190-286 (SDPA…KQRD). Positions 192–229 (PAPPPPPPSHPALLPPDATAPPPPPTSVAALPPPPPAQ) are enriched in pro residues. Residues 259–272 (AAAAAAAAAAAAAA) are compositionally biased toward low complexity. Residues 262–289 (AAAAAAAAAAAAKERKEEQRRKQRDEEG) adopt a coiled-coil conformation. Residues 273-286 (AKERKEEQRRKQRD) are compositionally biased toward basic and acidic residues. The region spanning 283–653 (KQRDEEGLHL…LCLLTASAWR (371 aa)) is the GRAS domain. The segment at 290–354 (LHLLTLLLQC…VSSCLGLYAP (65 aa)) is leucine repeat I (LRI). Residues 297 to 301 (LQCAE) carry the LxCxE motif motif. Residues 373-438 (FQVFNGISPF…GGPPRVRLTG (66 aa)) form a VHIID region. A VHIID motif is present at residues 404-408 (VHIID). Residues 448 to 480 (ATGKRLSDFADTLGLPFEFCPVADKAGNLDPEK) are leucine repeat II (LRII). The PFYRE stretch occupies residues 489 to 576 (VAVHWLRHSL…QQLLSREIRN (88 aa)). The SAW stretch occupies residues 579-653 (AVGGPARTGD…LCLLTASAWR (75 aa)).

The protein belongs to the GRAS family.

The protein resides in the cytoplasm. In terms of biological role, probable transcription factor involved in asmmetric cell division in the cortex/endodermis progenitor cell and in the process of stomata and ligule formation in leaves. The sequence is that of Protein SCARECROW 2 (SCR2) from Oryza sativa subsp. indica (Rice).